Consider the following 401-residue polypeptide: 4-hydroxy-3-methylbut-2-enyl diphosphate reductase (401 aa).

Residue Cys66 participates in [4Fe-4S] cluster binding. Position 96 (His96) interacts with (2E)-4-hydroxy-3-methylbut-2-enyl diphosphate. Residue His96 participates in dimethylallyl diphosphate binding. An isopentenyl diphosphate-binding site is contributed by His96. Cys157 is a binding site for [4Fe-4S] cluster. His185 is a (2E)-4-hydroxy-3-methylbut-2-enyl diphosphate binding site. Residue His185 participates in dimethylallyl diphosphate binding. Residue His185 participates in isopentenyl diphosphate binding. Catalysis depends on Glu187, which acts as the Proton donor. Thr250 is a (2E)-4-hydroxy-3-methylbut-2-enyl diphosphate binding site. Cys288 is a [4Fe-4S] cluster binding site. (2E)-4-hydroxy-3-methylbut-2-enyl diphosphate contacts are provided by Ser317, Ser318, Asn319, and Ser381. The dimethylallyl diphosphate site is built by Ser317, Ser318, Asn319, and Ser381. Residues Ser317, Ser318, Asn319, and Ser381 each coordinate isopentenyl diphosphate.

This sequence belongs to the IspH family. [4Fe-4S] cluster serves as cofactor.

It catalyses the reaction isopentenyl diphosphate + 2 oxidized [2Fe-2S]-[ferredoxin] + H2O = (2E)-4-hydroxy-3-methylbut-2-enyl diphosphate + 2 reduced [2Fe-2S]-[ferredoxin] + 2 H(+). The catalysed reaction is dimethylallyl diphosphate + 2 oxidized [2Fe-2S]-[ferredoxin] + H2O = (2E)-4-hydroxy-3-methylbut-2-enyl diphosphate + 2 reduced [2Fe-2S]-[ferredoxin] + 2 H(+). It participates in isoprenoid biosynthesis; dimethylallyl diphosphate biosynthesis; dimethylallyl diphosphate from (2E)-4-hydroxy-3-methylbutenyl diphosphate: step 1/1. It functions in the pathway isoprenoid biosynthesis; isopentenyl diphosphate biosynthesis via DXP pathway; isopentenyl diphosphate from 1-deoxy-D-xylulose 5-phosphate: step 6/6. Functionally, catalyzes the conversion of 1-hydroxy-2-methyl-2-(E)-butenyl 4-diphosphate (HMBPP) into a mixture of isopentenyl diphosphate (IPP) and dimethylallyl diphosphate (DMAPP). Acts in the terminal step of the DOXP/MEP pathway for isoprenoid precursor biosynthesis. This chain is 4-hydroxy-3-methylbut-2-enyl diphosphate reductase, found in Prochlorococcus marinus (strain NATL1A).